Consider the following 295-residue polypeptide: 4-diphosphocytidyl-2-C-methyl-D-erythritol kinase (295 aa).

The active site involves Lys22. 106 to 116 (PAGGGFGGGSS) serves as a coordination point for ATP. The active site involves Asp148.

Belongs to the GHMP kinase family. IspE subfamily.

The catalysed reaction is 4-CDP-2-C-methyl-D-erythritol + ATP = 4-CDP-2-C-methyl-D-erythritol 2-phosphate + ADP + H(+). The protein operates within isoprenoid biosynthesis; isopentenyl diphosphate biosynthesis via DXP pathway; isopentenyl diphosphate from 1-deoxy-D-xylulose 5-phosphate: step 3/6. Its function is as follows. Catalyzes the phosphorylation of the position 2 hydroxy group of 4-diphosphocytidyl-2C-methyl-D-erythritol. This is 4-diphosphocytidyl-2-C-methyl-D-erythritol kinase from Xanthomonas oryzae pv. oryzae (strain MAFF 311018).